A 206-amino-acid chain; its full sequence is Cytochrome c oxidase assembly protein CtaG (206 aa).

Topologically, residues 1-12 (MSKKPAGKNSNR) are cytoplasmic. A helical; Signal-anchor for type II membrane protein membrane pass occupies residues 13–35 (IVAAVCLAFFTGMIGMAYAAVPL). Residues 36-206 (YKMFCQATGY…ISDTEANLGG (171 aa)) are Periplasmic-facing. Residues 184–206 (VASSEPVQGTSKIISDTEANLGG) are disordered. Over residues 188-206 (EPVQGTSKIISDTEANLGG) the composition is skewed to polar residues.

The protein belongs to the COX11/CtaG family.

The protein localises to the cell inner membrane. In terms of biological role, exerts its effect at some terminal stage of cytochrome c oxidase synthesis, probably by being involved in the insertion of the copper B into subunit I. The polypeptide is Cytochrome c oxidase assembly protein CtaG (Mesorhizobium japonicum (strain LMG 29417 / CECT 9101 / MAFF 303099) (Mesorhizobium loti (strain MAFF 303099))).